The following is a 426-amino-acid chain: Serine--tRNA ligase (426 aa).

230–232 (TAE) provides a ligand contact to L-serine. Residue 261–263 (RSE) coordinates ATP. Glu284 is a binding site for L-serine. 348-351 (EISS) contributes to the ATP binding site. Ser384 contacts L-serine.

Belongs to the class-II aminoacyl-tRNA synthetase family. Type-1 seryl-tRNA synthetase subfamily. Homodimer. The tRNA molecule binds across the dimer.

The protein resides in the cytoplasm. It carries out the reaction tRNA(Ser) + L-serine + ATP = L-seryl-tRNA(Ser) + AMP + diphosphate + H(+). The catalysed reaction is tRNA(Sec) + L-serine + ATP = L-seryl-tRNA(Sec) + AMP + diphosphate + H(+). It participates in aminoacyl-tRNA biosynthesis; selenocysteinyl-tRNA(Sec) biosynthesis; L-seryl-tRNA(Sec) from L-serine and tRNA(Sec): step 1/1. In terms of biological role, catalyzes the attachment of serine to tRNA(Ser). Is also able to aminoacylate tRNA(Sec) with serine, to form the misacylated tRNA L-seryl-tRNA(Sec), which will be further converted into selenocysteinyl-tRNA(Sec). This is Serine--tRNA ligase from Phenylobacterium zucineum (strain HLK1).